Here is a 525-residue protein sequence, read N- to C-terminus: Vesicular inhibitory amino acid transporter (525 aa).

Residues 1 to 132 (MATLLRSKLS…WNVTNAIQGM (132 aa)) lie on the Cytoplasmic side of the membrane. A disordered region spans residues 69–111 (PCGDEGAEPPVEGDIHYQRGSGAPLPPSGSKDQVGAGGEFGGH). Residues 133–153 (FVLGLPYAILHGGYLGLFLII) traverse the membrane as a helical segment. Residues 154–204 (FAAVVCCYTGKILIACLYEENEDGEVVRVRDSYVAIANACCAPRFPTLGGR) are Lumenal, vesicle-facing. At Tyr-186 the chain carries 3'-nitrotyrosine. A helical membrane pass occupies residues 205-225 (VVNVAQIIELVMTCILYVVVS). Residues 226-265 (GNLMYNSFPGLPVSQKSWSIIATAVLLPCAFLKNLKAVSK) are Cytoplasmic-facing. A helical membrane pass occupies residues 266–286 (FSLLCTLAHFVINILVIAYCL). At 287–305 (SRARDWAWEKVKFYIDVKK) the chain is on the lumenal, vesicle side. The chain crosses the membrane as a helical span at residues 306 to 326 (FPISIGIIVFSYTSQIFLPSL). Residues 327–341 (EGNMQQPSEFHCMMN) lie on the Cytoplasmic side of the membrane. A helical transmembrane segment spans residues 342 to 362 (WTHIAACVLKGLFALVAYLTW). The Lumenal, vesicle segment spans residues 363–383 (ADETKEVITDNLPGSIRAVVN). Residues 384 to 404 (IFLVAKALLSYPLPFFAAVEV) form a helical membrane-spanning segment. The Cytoplasmic segment spans residues 405–438 (LEKSLFQEGSRAFFPACYGGDGRLKSWGLTLRCA). A helical transmembrane segment spans residues 439-459 (LVVFTLLMAIYVPHFALLMGL). Residues 460 to 461 (TG) lie on the Lumenal, vesicle side of the membrane. Residues 462–482 (SLTGAGLCFLLPSLFHLRLLW) form a helical membrane-spanning segment. The Cytoplasmic segment spans residues 483–489 (RKLLWHQ). The helical transmembrane segment at 490 to 510 (VFFDVAIFVIGGICSVSGFVH) threads the bilayer. At 511–525 (SLEGLIEAYRTNAED) the chain is on the lumenal, vesicle side.

This sequence belongs to the amino acid/polyamine transporter 2 family.

The protein resides in the cytoplasmic vesicle membrane. The protein localises to the presynapse. The enzyme catalyses 4-aminobutanoate(out) + n H(+)(in) = 4-aminobutanoate(in) + n H(+)(out). It catalyses the reaction glycine(out) + n H(+)(in) = glycine(in) + n H(+)(out). It carries out the reaction beta-alanine(out) + n H(+)(in) = beta-alanine(in) + n H(+)(out). In terms of biological role, antiporter that exchanges vesicular protons for cytosolic 4-aminobutanoate or to a lesser extend glycine, thus allowing their secretion from nerve terminals. The transport is equally dependent on the chemical and electrical components of the proton gradient. May also transport beta-alanine. Acidification of GABAergic synaptic vesicles is a prerequisite for 4-aminobutanoate uptake. The protein is Vesicular inhibitory amino acid transporter of Macaca fascicularis (Crab-eating macaque).